Here is a 61-residue protein sequence, read N- to C-terminus: Sperm protamine P1 (61 aa).

Residues M1 to Y61 form a disordered region.

The protein belongs to the protamine P1 family. In terms of tissue distribution, testis.

It localises to the nucleus. The protein localises to the chromosome. Functionally, protamines substitute for histones in the chromatin of sperm during the haploid phase of spermatogenesis. They compact sperm DNA into a highly condensed, stable and inactive complex. This is Sperm protamine P1 (PRM1) from Potorous longipes (Long-footed potoroo).